We begin with the raw amino-acid sequence, 287 residues long: Zinc finger protein SNAI3 (287 aa).

The interval 1 to 20 is SNAG domain; the sequence is MPRSFLVKTHSSHRVPNYGK. 4 C2H2-type zinc fingers span residues 147–169, 178–200, 204–226, and 232–254; these read FECI…QQLH, FTCR…IRTH, CICK…IRTH, and YTCS…LQTH. The C2H2-type 5; degenerate zinc finger occupies 260–282; it reads YRCAVCPKAFSRMSLLARHEEAG.

Belongs to the snail C2H2-type zinc-finger protein family. In terms of tissue distribution, highly expressed in skeletal muscle and thymus. Lower expression in heart, lung and spleen.

It localises to the nucleus. In terms of biological role, seems to inhibit myoblast differentiation. Transcriptional repressor of E-box-dependent transactivation of downstream myogenic bHLHs genes. Binds preferentially to the canonical E-box sequences 5'-CAGGTG-3' and 5'-CACCTG-3'. The sequence is that of Zinc finger protein SNAI3 (Snai3) from Mus musculus (Mouse).